Consider the following 301-residue polypeptide: Radial spoke head 1 homolog (301 aa).

Residues 1–20 (MSDLGSEELEEEGENDLGEY) show a composition bias toward acidic residues. The disordered stretch occupies residues 1–41 (MSDLGSEELEEEGENDLGEYEGERNEVGERHGHGKARLPNG). MORN repeat units lie at residues 20-43 (YEGE…NGDT), 44-66 (YEGS…NGAR), 67-89 (YTGD…DGSR), 90-112 (YEGE…NNDT), 113-135 (YTGE…ETGS), and 159-181 (YQGK…IGCE). Over residues 21 to 31 (EGERNEVGERH) the composition is skewed to basic and acidic residues. Residues 225–301 (LSEEQPPPEG…FDEEPSDLQD (77 aa)) form a disordered region. The span at 249–261 (PSEDIQAEGFEGE) shows a compositional bias: acidic residues. A compositionally biased stretch (basic and acidic residues) spans 262-278 (LEPRGADEDVDTFRQES). Polar residues predominate over residues 279 to 290 (QENSYDIDQGNL). The segment covering 292 to 301 (FDEEPSDLQD) has biased composition (acidic residues).

As to quaternary structure, component of the axonemal radial spoke 1 (RS1) and 2 (RS2) complexes, at least composed of spoke head proteins RSPH1, RSPH3, RSPH9 and the cilia-specific component RSPH4A or sperm-specific component RSPH6A, spoke stalk proteins RSPH14, DNAJB13, DYDC1, ROPN1L and NME5, and the RS1 complex-specific anchor protein IQUB. Interacts with RSPH3B. Interacts with RSPH4A. Interacts with RSPH6A. Expressed in the trachea, ependymal cells, oviduct and ependymal cells (at protein level). Germ cell specific. Specifically expressed in testis, and to a lower extent in ovary. Not expressed in somatic tissues.

Its subcellular location is the cytoplasm. The protein localises to the chromosome. It localises to the cytoskeleton. The protein resides in the cilium axoneme. It is found in the flagellum axoneme. Functions as part of axonemal radial spoke complexes that play an important part in the motility of sperm and cilia. The polypeptide is Radial spoke head 1 homolog (Rsph1) (Mus musculus (Mouse)).